The primary structure comprises 275 residues: 3-methyl-2-oxobutanoate hydroxymethyltransferase (275 aa).

Positions 49 and 88 each coordinate Mg(2+). Residues 49–50 (DS), Asp88, and Lys118 each bind 3-methyl-2-oxobutanoate. Glu120 serves as a coordination point for Mg(2+). Glu187 (proton acceptor) is an active-site residue.

The protein belongs to the PanB family. As to quaternary structure, homodecamer; pentamer of dimers. Mg(2+) is required as a cofactor.

It is found in the cytoplasm. The catalysed reaction is 3-methyl-2-oxobutanoate + (6R)-5,10-methylene-5,6,7,8-tetrahydrofolate + H2O = 2-dehydropantoate + (6S)-5,6,7,8-tetrahydrofolate. The protein operates within cofactor biosynthesis; (R)-pantothenate biosynthesis; (R)-pantoate from 3-methyl-2-oxobutanoate: step 1/2. Catalyzes the reversible reaction in which hydroxymethyl group from 5,10-methylenetetrahydrofolate is transferred onto alpha-ketoisovalerate to form ketopantoate. The sequence is that of 3-methyl-2-oxobutanoate hydroxymethyltransferase from Hyphomonas neptunium (strain ATCC 15444).